Here is a 431-residue protein sequence, read N- to C-terminus: tRNA-2-methylthio-N(6)-dimethylallyladenosine synthase (431 aa).

The region spanning 2–117 (KKLFIETLGC…ITEVVDKKHA (116 aa)) is the MTTase N-terminal domain. C11, C48, C80, C149, C153, and C156 together coordinate [4Fe-4S] cluster. In terms of domain architecture, Radical SAM core spans 135-368 (RTNPFKAMVN…QTRHTEILDE (234 aa)). The TRAM domain maps to 371-431 (DAQLGKVHEV…SRGALDGVLV (61 aa)).

This sequence belongs to the methylthiotransferase family. MiaB subfamily. In terms of assembly, monomer. Requires [4Fe-4S] cluster as cofactor.

The protein localises to the cytoplasm. It catalyses the reaction N(6)-dimethylallyladenosine(37) in tRNA + (sulfur carrier)-SH + AH2 + 2 S-adenosyl-L-methionine = 2-methylsulfanyl-N(6)-dimethylallyladenosine(37) in tRNA + (sulfur carrier)-H + 5'-deoxyadenosine + L-methionine + A + S-adenosyl-L-homocysteine + 2 H(+). In terms of biological role, catalyzes the methylthiolation of N6-(dimethylallyl)adenosine (i(6)A), leading to the formation of 2-methylthio-N6-(dimethylallyl)adenosine (ms(2)i(6)A) at position 37 in tRNAs that read codons beginning with uridine. The polypeptide is tRNA-2-methylthio-N(6)-dimethylallyladenosine synthase (Sulfurovum sp. (strain NBC37-1)).